Here is an 805-residue protein sequence, read N- to C-terminus: 1,4-alpha-glucan-branching enzyme 2-2, chloroplastic/amyloplastic (805 aa).

Residues 1 to 32 constitute a chloroplast transit peptide; that stretch reads MVVIHGVSLTPRFTLPSRPLNTGFNAGNSTLS. Residue D451 is the Nucleophile of the active site. E506 serves as the catalytic Proton donor.

The protein belongs to the glycosyl hydrolase 13 family. GlgB subfamily. Monomer. As to expression, expressed in seedlings, roots, stems, leaves, inflorescences, seeds and flowers.

The protein localises to the plastid. It is found in the chloroplast stroma. Its subcellular location is the amyloplast. The catalysed reaction is Transfers a segment of a (1-&gt;4)-alpha-D-glucan chain to a primary hydroxy group in a similar glucan chain.. The protein operates within glycan biosynthesis; starch biosynthesis. Catalyzes the formation of the alpha-1,6-glucosidic linkages in starch by scission of a 1,4-alpha-linked oligosaccharide from growing alpha-1,4-glucan chains and the subsequent attachment of the oligosaccharide to the alpha-1,6 position. The sequence is that of 1,4-alpha-glucan-branching enzyme 2-2, chloroplastic/amyloplastic (SBE2.2) from Arabidopsis thaliana (Mouse-ear cress).